A 1002-amino-acid chain; its full sequence is yemanuclein (1002 aa).

The Nuclear localization signal motif lies at 80 to 85; the sequence is KKKTKK. 3 disordered regions span residues 193-358, 395-428, and 642-725; these read AIIK…KKVV, VSTD…GQEN, and KLKA…AKQV. The span at 207–217 shows a compositional bias: low complexity; that stretch reads SSSSESSSSSS. The span at 218 to 262 shows a compositional bias: acidic residues; that stretch reads GDDDENDDGNNEEDDESDSEDDSEENDESDSEDDSESESLEDEDS. 2 repeat units span residues 230–241 and 242–253. The interval 230–253 is 2 X 12 AA tandem repeats; sequence EDDESDSEDDSEENDESDSEDDSE. Low complexity-rich tracts occupy residues 286-320, 336-358, and 395-404; these read TGKS…RPST, QPSS…KKVV, and VSTDVSSSDS. A compositionally biased stretch (basic and acidic residues) spans 408–427; it reads ESEHGRADRQAGQHGKDGQE. A compositionally biased stretch (low complexity) spans 653–667; sequence PASASPKPVGVVSAP. Positions 679-689 are enriched in basic and acidic residues; that stretch reads AVEDPRSRGNS. Ser685 and Ser689 each carry phosphoserine. Low complexity predominate over residues 690 to 701; that stretch reads DTDSATSASSNS. Phosphoserine occurs at positions 885, 886, and 887. The disordered stretch occupies residues 901–928; the sequence is SKPQKKVQSKPKNKTQNRGRSSLGAVGQ. Positions 903–917 are enriched in basic residues; that stretch reads PQKKVQSKPKNKTQN.

The N-terminus is blocked. In terms of tissue distribution, oocyte specific.

The protein resides in the nucleus. Its subcellular location is the nucleoplasm. It is found in the chromosome. It localises to the centromere. The protein localises to the kinetochore. May play a key role in egg organization. May be a transcriptional regulator having a role in chromatin remodeling in concert with Hira, a histone chaperone. Involved in chromosome segregation by affecting kinetochores function in the first meiotic division. In Drosophila melanogaster (Fruit fly), this protein is yemanuclein.